We begin with the raw amino-acid sequence, 264 residues long: Thiazole synthase (264 aa).

The active-site Schiff-base intermediate with DXP is the Lys-106. Residues Gly-167, 193–194 (AG), and 215–216 (NS) each bind 1-deoxy-D-xylulose 5-phosphate.

This sequence belongs to the ThiG family. In terms of assembly, homotetramer. Forms heterodimers with either ThiH or ThiS.

The protein resides in the cytoplasm. It catalyses the reaction [ThiS sulfur-carrier protein]-C-terminal-Gly-aminoethanethioate + 2-iminoacetate + 1-deoxy-D-xylulose 5-phosphate = [ThiS sulfur-carrier protein]-C-terminal Gly-Gly + 2-[(2R,5Z)-2-carboxy-4-methylthiazol-5(2H)-ylidene]ethyl phosphate + 2 H2O + H(+). Its pathway is cofactor biosynthesis; thiamine diphosphate biosynthesis. Catalyzes the rearrangement of 1-deoxy-D-xylulose 5-phosphate (DXP) to produce the thiazole phosphate moiety of thiamine. Sulfur is provided by the thiocarboxylate moiety of the carrier protein ThiS. In vitro, sulfur can be provided by H(2)S. The protein is Thiazole synthase of Prochlorococcus marinus (strain MIT 9312).